A 550-amino-acid chain; its full sequence is Cytochrome P450 monooxygenase FFUJ_09176 (550 aa).

Residues 1-31 form the signal peptide; it reads MLQTIPMPSRELTIALAVLSLLMVLVQRAGS. Residues 430-441 are compositionally biased toward basic and acidic residues; sequence FIPERFEGDTRS. Residues 430 to 451 are disordered; that stretch reads FIPERFEGDTRSSQESAASPDV. A heme-binding site is contributed by Cys466.

It belongs to the cytochrome P450 family.

Its function is as follows. Cytochrome P450 monooxygenase; part of the DMATS1 gene cluster that mediates the biosynthesis of a reversely N-prenylated monomeric L-tryptophan (r-N-DMAT). Seems not to contribute to the final DMATS1 product. The protein is Cytochrome P450 monooxygenase FFUJ_09176 of Gibberella fujikuroi (strain CBS 195.34 / IMI 58289 / NRRL A-6831) (Bakanae and foot rot disease fungus).